A 913-amino-acid polypeptide reads, in one-letter code: DNA mismatch repair protein MutS (913 aa).

ATP is bound at residue 720 to 727; sequence GPNASGKS.

Belongs to the DNA mismatch repair MutS family.

In terms of biological role, this protein is involved in the repair of mismatches in DNA. It is possible that it carries out the mismatch recognition step. This protein has a weak ATPase activity. The protein is DNA mismatch repair protein MutS of Prochlorococcus marinus (strain AS9601).